A 185-amino-acid chain; its full sequence is MHSVMETLFSQLIQEIGEDVSREGLVDTPKRAASAFRFLNSGYHQSLDHVLNNAVFEADSEDMVIVKDIELYSLCEHHLLPFIGKCHVGYLPQGKVIGLSKIARIVEMYARRLQIQERLTKQIADAIQTAVNPRGVAVVVEAKHLCMMMRGVEKQNSVMTTSSMLGLFRKQSSTRAEFLDLIGRK.

Zn(2+)-binding residues include Cys75, His78, and Cys146.

The protein belongs to the GTP cyclohydrolase I family. As to quaternary structure, toroid-shaped homodecamer, composed of two pentamers of five dimers.

It carries out the reaction GTP + H2O = 7,8-dihydroneopterin 3'-triphosphate + formate + H(+). It participates in cofactor biosynthesis; 7,8-dihydroneopterin triphosphate biosynthesis; 7,8-dihydroneopterin triphosphate from GTP: step 1/1. This Methylococcus capsulatus (strain ATCC 33009 / NCIMB 11132 / Bath) protein is GTP cyclohydrolase 1.